The following is a 505-amino-acid chain: Deoxyguanosinetriphosphate triphosphohydrolase (505 aa).

The region spanning 66 to 273 is the HD domain; sequence RLTHSLEVQQ…MEAADDISYC (208 aa).

The protein belongs to the dGTPase family. Type 1 subfamily. As to quaternary structure, homotetramer. The cofactor is Mg(2+).

The catalysed reaction is dGTP + H2O = 2'-deoxyguanosine + triphosphate + H(+). DGTPase preferentially hydrolyzes dGTP over the other canonical NTPs. This Escherichia fergusonii (strain ATCC 35469 / DSM 13698 / CCUG 18766 / IAM 14443 / JCM 21226 / LMG 7866 / NBRC 102419 / NCTC 12128 / CDC 0568-73) protein is Deoxyguanosinetriphosphate triphosphohydrolase.